Consider the following 69-residue polypeptide: Cytochrome c oxidase subunit 8A, mitochondrial (69 aa).

Residues M1–K25 constitute a mitochondrion transit peptide. An SIFI-degron motif is present at residues S2–L19. Topologically, residues V26 to G36 are mitochondrial matrix. Residues T37 to S60 form a helical membrane-spanning segment. Over H61–E69 the chain is Mitochondrial intermembrane.

This sequence belongs to the cytochrome c oxidase VIII family. Component of the cytochrome c oxidase (complex IV, CIV), a multisubunit enzyme composed of 14 subunits. The complex is composed of a catalytic core of 3 subunits MT-CO1, MT-CO2 and MT-CO3, encoded in the mitochondrial DNA, and 11 supernumerary subunits COX4I, COX5A, COX5B, COX6A, COX6B, COX6C, COX7A, COX7B, COX7C, COX8 and NDUFA4, which are encoded in the nuclear genome. The complex exists as a monomer or a dimer and forms supercomplexes (SCs) in the inner mitochondrial membrane with NADH-ubiquinone oxidoreductase (complex I, CI) and ubiquinol-cytochrome c oxidoreductase (cytochrome b-c1 complex, complex III, CIII), resulting in different assemblies (supercomplex SCI(1)III(2)IV(1) and megacomplex MCI(2)III(2)IV(2)). Post-translationally, in response to mitochondrial stress, the precursor protein is ubiquitinated by the SIFI complex in the cytoplasm before mitochondrial import, leading to its degradation. Within the SIFI complex, UBR4 initiates ubiquitin chain that are further elongated or branched by KCMF1.

It is found in the mitochondrion inner membrane. It functions in the pathway energy metabolism; oxidative phosphorylation. Component of the cytochrome c oxidase, the last enzyme in the mitochondrial electron transport chain which drives oxidative phosphorylation. The respiratory chain contains 3 multisubunit complexes succinate dehydrogenase (complex II, CII), ubiquinol-cytochrome c oxidoreductase (cytochrome b-c1 complex, complex III, CIII) and cytochrome c oxidase (complex IV, CIV), that cooperate to transfer electrons derived from NADH and succinate to molecular oxygen, creating an electrochemical gradient over the inner membrane that drives transmembrane transport and the ATP synthase. Cytochrome c oxidase is the component of the respiratory chain that catalyzes the reduction of oxygen to water. Electrons originating from reduced cytochrome c in the intermembrane space (IMS) are transferred via the dinuclear copper A center (CU(A)) of subunit 2 and heme A of subunit 1 to the active site in subunit 1, a binuclear center (BNC) formed by heme A3 and copper B (CU(B)). The BNC reduces molecular oxygen to 2 water molecules using 4 electrons from cytochrome c in the IMS and 4 protons from the mitochondrial matrix. This Papio anubis (Olive baboon) protein is Cytochrome c oxidase subunit 8A, mitochondrial (COX8A).